Here is a 1893-residue protein sequence, read N- to C-terminus: Plexin-A4 (1893 aa).

Residues 1-23 form the signal peptide; the sequence is MKAMPWNWTCLLSHLLVVGMGSS. In terms of domain architecture, Sema spans 24–506; the sequence is TLLPRQPPQL…SERQLTRVPV (483 aa). Residues 24 to 1236 are Extracellular-facing; that stretch reads TLLPRQPPQL…IAPDSPLSLP (1213 aa). 10 cysteine pairs are disulfide-bonded: cysteine 94–cysteine 103, cysteine 129–cysteine 137, cysteine 283–cysteine 404, cysteine 299–cysteine 355, cysteine 373–cysteine 392, cysteine 509–cysteine 526, cysteine 515–cysteine 557, cysteine 518–cysteine 535, cysteine 529–cysteine 541, and cysteine 592–cysteine 611. The 51-residue stretch at 508–558 folds into the PSI 1 domain; sequence SCGQYRSCGECLGSGDPHCGWCVLHNTCTRKERCERSREPRRFASEMKQCV. Asparagine 654 carries N-linked (GlcNAc...) asparagine glycosylation. 2 consecutive PSI domains span residues 654–701 and 802–855; these read NCSV…EDCP and KCGA…SKCT. IPT/TIG domains lie at 857–951, 953–1036, 1039–1138, and 1141–1229; these read PRIT…YYFM, LTLA…FQYV, PTIV…FTYY, and PVFE…YIAP. N-linked (GlcNAc...) asparagine glycans are attached at residues asparagine 1006, asparagine 1131, and asparagine 1179. The helical transmembrane segment at 1237 to 1257 threads the bilayer; the sequence is AIVSIAVAGGLLIIFIVAVLI. Over 1258 to 1893 the chain is Cytoplasmic; the sequence is AYKRKSRESD…QVITLMSLDS (636 aa). Lysine 1349 is subject to N6-acetyllysine.

This sequence belongs to the plexin family. As to quaternary structure, interacts with NRP1 and NRP2. Expressed in the developing nervous system. Widely expressed in both the central and peripheral nervous systems. Expressed in the peripheral ganglia, somatosensory, olfactory, visual, auditory and equilibrium systems.

It is found in the cell membrane. In terms of biological role, coreceptor for SEMA3A. Necessary for signaling by class 3 semaphorins and subsequent remodeling of the cytoskeleton. Plays a role in axon guidance in the developing nervous system. Class 3 semaphorins bind to a complex composed of a neuropilin and a plexin. The plexin modulates the affinity of the complex for specific semaphorins, and its cytoplasmic domain is required for the activation of down-stream signaling events in the cytoplasm. The protein is Plexin-A4 (Plxna4) of Mus musculus (Mouse).